Here is a 432-residue protein sequence, read N- to C-terminus: Adenylosuccinate synthetase (432 aa).

GTP contacts are provided by residues 12 to 18 and 40 to 42; these read GDEGKGK and GHT. The active-site Proton acceptor is Asp13. Asp13 and Gly40 together coordinate Mg(2+). IMP contacts are provided by residues 13–16, 38–41, Thr129, Arg143, Gln224, Thr239, and Arg303; these read DEGK and NAGH. Residue His41 is the Proton donor of the active site. 299–305 is a substrate binding site; sequence VTTGRRR. Residues Arg305, 331-333, and 413-415 each bind GTP; these read KLD and GVG.

Belongs to the adenylosuccinate synthetase family. In terms of assembly, homodimer. Mg(2+) is required as a cofactor.

The protein resides in the cytoplasm. The catalysed reaction is IMP + L-aspartate + GTP = N(6)-(1,2-dicarboxyethyl)-AMP + GDP + phosphate + 2 H(+). The protein operates within purine metabolism; AMP biosynthesis via de novo pathway; AMP from IMP: step 1/2. In terms of biological role, plays an important role in the de novo pathway of purine nucleotide biosynthesis. Catalyzes the first committed step in the biosynthesis of AMP from IMP. The chain is Adenylosuccinate synthetase from Mycobacterium tuberculosis (strain CDC 1551 / Oshkosh).